The sequence spans 100 residues: Succinate dehydrogenase assembly factor 4, mitochondrial (100 aa).

The transit peptide at 1–31 (MFNRNLRAVILKNYNKALTRCLHDAGNLKRP) directs the protein to the mitochondrion. The tract at residues 24–100 (DAGNLKRPTP…YSYEGRVTDF (77 aa)) is disordered. Basic and acidic residues-rich tracts occupy residues 36-68 (LPKE…KDFE) and 85-100 (PTVH…VTDF).

This sequence belongs to the SDHAF4 family. In terms of assembly, interacts with sdh1 in its FAD-bound form.

It localises to the mitochondrion matrix. Its function is as follows. Plays an essential role in the assembly of succinate dehydrogenase (SDH), an enzyme complex (also referred to as respiratory complex II) that is a component of both the tricarboxylic acid (TCA) cycle and the mitochondrial electron transport chain, and which couples the oxidation of succinate to fumarate with the reduction of ubiquinone (coenzyme Q) to ubiquinol. Binds to the flavoprotein subunit sdh1 in its FAD-bound form, blocking the generation of excess reactive oxygen species (ROS) and facilitating its assembly with the iron-sulfur protein subunit sdh2 into the SDH catalytic dimer. This Schizosaccharomyces pombe (strain 972 / ATCC 24843) (Fission yeast) protein is Succinate dehydrogenase assembly factor 4, mitochondrial.